Consider the following 245-residue polypeptide: Anti-Pycsar protein Apyc1 (245 aa).

Residues 19–219 (FNNNALLYAG…EIQSQILLKH (201 aa)) are beta-lactamase-like. Zn(2+) contacts are provided by His-61, His-63, Asp-65, His-66, His-145, Asp-165, and His-219.

Belongs to the anti-Pycsar protein Apyc1 family. As to quaternary structure, homodimer. It depends on Zn(2+) as a cofactor.

It catalyses the reaction 3',5'-cyclic CMP + H2O = CMP + H(+). It carries out the reaction 3',5'-cyclic UMP + H2O = UMP + H(+). In terms of biological role, counteracts the endogenous Pycsar antiviral defense system. Phosphodiesterase that enables metal-dependent hydrolysis of host cyclic nucleotide Pycsar defense signals such as cCMP and cUMP. The sequence is that of Anti-Pycsar protein Apyc1 from Paenibacillus sp. (strain J14).